We begin with the raw amino-acid sequence, 57 residues long: UPF0434 protein Spea_1772 (57 aa).

It belongs to the UPF0434 family.

In Shewanella pealeana (strain ATCC 700345 / ANG-SQ1), this protein is UPF0434 protein Spea_1772.